We begin with the raw amino-acid sequence, 310 residues long: Protein OS-9 homolog (310 aa).

Positions M1 to A40 are cleaved as a signal peptide. Residues N60, N97, and N104 are each glycosylated (N-linked (GlcNAc...) asparagine). The MRH domain occupies N129–L255. Residues W139 and Q151 each coordinate a mannooligosaccharide derivative. N-linked (GlcNAc...) asparagine glycosylation occurs at N204. Intrachain disulfides connect C208–C241 and C223–C253. A mannooligosaccharide derivative contacts are provided by D209, R215, E237, and Y243. Composition is skewed to basic and acidic residues over residues V282–D292 and E301–S310. The interval V282–S310 is disordered.

The protein belongs to the OS-9 family. As to quaternary structure, interacts with missfolded ER lumenal proteins.

The protein localises to the endoplasmic reticulum membrane. Lectin involved in the quality control of the secretory pathway. As a member of the endoplasmic reticulum-associated degradation lumenal (ERAD-L) surveillance system, targets misfolded endoplasmic reticulum lumenal glycoproteins for degradation. The chain is Protein OS-9 homolog (yos9) from Schizosaccharomyces pombe (strain 972 / ATCC 24843) (Fission yeast).